We begin with the raw amino-acid sequence, 271 residues long: ATP-dependent Clp protease proteolytic subunit 6, chloroplastic (271 aa).

The tract at residues 1–30 (MAGLAISPPLGLSFSSRTRNPKPTSFLSHN) is disordered. A chloroplast-targeting transit peptide spans 1 to 77 (MAGLAISPPL…KAPRFGVIEA (77 aa)). The span at 13–30 (SFSSRTRNPKPTSFLSHN) shows a compositional bias: polar residues. The Nucleophile role is filled by serine 175. Histidine 200 is a catalytic residue.

Belongs to the peptidase S14 family. In terms of assembly, component of the chloroplastic Clp protease core complex which consist of at least 16 proteins: CLPP4 (3 copies), CLPP5 (3 copies), CLPR4 (2 copies), ClpP1 (1 copy), CLPP6 (1 copy), CLPR2 (1 copy), CLPT1 (1 copy), CLPT2 (1 copy) and 3 copies of CLPP3 and/or CLPR1 and/or CLPR3. The core complex is organized in two heptameric rings, one containing CLPP3,4,5,6 in a 1:2:3:1 ratio and the other CLPP1 and CLPR1,2,3,4 in a 3:1:1:1:1 ratio. Mostly expressed in leaves. Also detected in stems, and to a lower extent, in roots (at protein level).

Its subcellular location is the plastid. The protein resides in the chloroplast stroma. It catalyses the reaction Hydrolysis of proteins to small peptides in the presence of ATP and magnesium. alpha-casein is the usual test substrate. In the absence of ATP, only oligopeptides shorter than five residues are hydrolyzed (such as succinyl-Leu-Tyr-|-NHMec, and Leu-Tyr-Leu-|-Tyr-Trp, in which cleavage of the -Tyr-|-Leu- and -Tyr-|-Trp bonds also occurs).. In terms of biological role, cleaves peptides in various proteins in a process that requires ATP hydrolysis. Has a chymotrypsin-like activity. Plays a major role in the degradation of misfolded proteins. Essential protein required for chloroplast development and integrity. This Arabidopsis thaliana (Mouse-ear cress) protein is ATP-dependent Clp protease proteolytic subunit 6, chloroplastic.